The following is a 469-amino-acid chain: ATP synthase subunit beta (469 aa).

Residue Gly-155–Thr-162 participates in ATP binding.

This sequence belongs to the ATPase alpha/beta chains family. In terms of assembly, F-type ATPases have 2 components, CF(1) - the catalytic core - and CF(0) - the membrane proton channel. CF(1) has five subunits: alpha(3), beta(3), gamma(1), delta(1), epsilon(1). CF(0) has three main subunits: a(1), b(2) and c(9-12). The alpha and beta chains form an alternating ring which encloses part of the gamma chain. CF(1) is attached to CF(0) by a central stalk formed by the gamma and epsilon chains, while a peripheral stalk is formed by the delta and b chains.

The protein resides in the cell inner membrane. It carries out the reaction ATP + H2O + 4 H(+)(in) = ADP + phosphate + 5 H(+)(out). Functionally, produces ATP from ADP in the presence of a proton gradient across the membrane. The catalytic sites are hosted primarily by the beta subunits. The polypeptide is ATP synthase subunit beta (Syntrophus aciditrophicus (strain SB)).